Consider the following 321-residue polypeptide: Glucokinase (321 aa).

8–13 is an ATP binding site; sequence GDVGGT.

The protein belongs to the bacterial glucokinase family.

It is found in the cytoplasm. The catalysed reaction is D-glucose + ATP = D-glucose 6-phosphate + ADP + H(+). The polypeptide is Glucokinase (Salmonella heidelberg (strain SL476)).